We begin with the raw amino-acid sequence, 276 residues long: Microtubule-associated protein RP/EB family member 1A (276 aa).

In terms of domain architecture, Calponin-homology (CH) spans F13–D115. Residues E124–G172 form a disordered region. Over residues V129–V141 the composition is skewed to basic and acidic residues. Residues S162–G172 show a composition bias toward low complexity. Residues P173–A243 enclose the EB1 C-terminal domain. Residues N252–A276 form a disordered region. The segment covering V257 to E270 has biased composition (acidic residues).

This sequence belongs to the MAPRE family. Homodimer and heterodimer with EB1B. Interacts with tobamovirus movement protein. As to expression, highly expressed in guard cells of leaf stomata, pollen grains and pollen tubes. Expressed in young roots.

The protein resides in the cytoplasm. It is found in the cytoskeleton. The protein localises to the spindle pole. Its subcellular location is the phragmoplast. In terms of biological role, binds to the plus end of microtubules and regulates the dynamics of the microtubule cytoskeleton. May be involved in anchoring microtubules to their nucleation sites and/or functioning as a reservoir for distribution to the growing end. In plants, microtubule minus ends are not necessarily severed from the nucleation site and transported to the plus end of a microtubule as part of the recycling process. May play a role in endomembrane organization during polarized growth of plant cells. Interacts with the tobamovirus movement protein (MP) and may play a role in the association of MP with the microtubule system during infection. This Arabidopsis thaliana (Mouse-ear cress) protein is Microtubule-associated protein RP/EB family member 1A (EB1A).